A 309-amino-acid chain; its full sequence is Aspartate carbamoyltransferase catalytic subunit (309 aa).

The carbamoyl phosphate site is built by arginine 58 and threonine 59. Residue lysine 86 participates in L-aspartate binding. Positions 108, 136, and 139 each coordinate carbamoyl phosphate. Residues arginine 169 and arginine 223 each coordinate L-aspartate. 2 residues coordinate carbamoyl phosphate: glycine 264 and proline 265.

The protein belongs to the aspartate/ornithine carbamoyltransferase superfamily. ATCase family. In terms of assembly, heterododecamer (2C3:3R2) of six catalytic PyrB chains organized as two trimers (C3), and six regulatory PyrI chains organized as three dimers (R2).

It catalyses the reaction carbamoyl phosphate + L-aspartate = N-carbamoyl-L-aspartate + phosphate + H(+). It participates in pyrimidine metabolism; UMP biosynthesis via de novo pathway; (S)-dihydroorotate from bicarbonate: step 2/3. Its function is as follows. Catalyzes the condensation of carbamoyl phosphate and aspartate to form carbamoyl aspartate and inorganic phosphate, the committed step in the de novo pyrimidine nucleotide biosynthesis pathway. The polypeptide is Aspartate carbamoyltransferase catalytic subunit (Pelotomaculum thermopropionicum (strain DSM 13744 / JCM 10971 / SI)).